Consider the following 84-residue polypeptide: Small ribosomal subunit protein bS20 (84 aa).

Belongs to the bacterial ribosomal protein bS20 family.

In terms of biological role, binds directly to 16S ribosomal RNA. The polypeptide is Small ribosomal subunit protein bS20 (Bacteroides thetaiotaomicron (strain ATCC 29148 / DSM 2079 / JCM 5827 / CCUG 10774 / NCTC 10582 / VPI-5482 / E50)).